A 26-amino-acid polypeptide reads, in one-letter code: Mucus envelope protein (26 aa).

In terms of processing, glycosylated. As to expression, produced by the opercular gland in the gill cavity and secreted as part of the mucus cocoon.

The protein localises to the secreted. In terms of biological role, exhibits antibacterial activity. May play a role in protection against parasite settlement. The chain is Mucus envelope protein from Scarus vetula (Queen parrotfish).